The sequence spans 313 residues: Protoheme IX farnesyltransferase (313 aa).

8 helical membrane passes run 34–54, 56–76, 105–125, 128–148, 152–172, 173–193, 243–263, and 291–311; these read VIELLLVTTIPAMLLADRGTV, PLLILNTLVGGLLAAAGANTL, HALIFGLALSVLSFFWLWWTT, LSAHLAGATIAFYVLIYTLVL, TSQNVVWGGAAGCMPVMIGWS, AVTGTIQWPALVMFLIIFFWT, LALATGWLYAAVAIVAGTWFL, and YLAVVFCALAVDSALALPTLF.

The protein belongs to the UbiA prenyltransferase family. Protoheme IX farnesyltransferase subfamily.

It localises to the cell membrane. The catalysed reaction is heme b + (2E,6E)-farnesyl diphosphate + H2O = Fe(II)-heme o + diphosphate. The protein operates within porphyrin-containing compound metabolism; heme O biosynthesis; heme O from protoheme: step 1/1. Functionally, converts heme B (protoheme IX) to heme O by substitution of the vinyl group on carbon 2 of heme B porphyrin ring with a hydroxyethyl farnesyl side group. The protein is Protoheme IX farnesyltransferase of Mycolicibacterium vanbaalenii (strain DSM 7251 / JCM 13017 / BCRC 16820 / KCTC 9966 / NRRL B-24157 / PYR-1) (Mycobacterium vanbaalenii).